The sequence spans 36 residues: Cytochrome b6-f complex subunit 5 (36 aa).

A helical transmembrane segment spans residues 5-25 (LLSGIVLGLIPITILGLLMAA).

This sequence belongs to the PetG family. As to quaternary structure, the 4 large subunits of the cytochrome b6-f complex are cytochrome b6, subunit IV (17 kDa polypeptide, PetD), cytochrome f and the Rieske protein, while the 4 small subunits are PetG, PetL, PetM and PetN. The complex functions as a dimer.

The protein localises to the plastid. It localises to the chloroplast thylakoid membrane. Component of the cytochrome b6-f complex, which mediates electron transfer between photosystem II (PSII) and photosystem I (PSI), cyclic electron flow around PSI, and state transitions. PetG is required for either the stability or assembly of the cytochrome b6-f complex. This is Cytochrome b6-f complex subunit 5 from Cyanidioschyzon merolae (strain NIES-3377 / 10D) (Unicellular red alga).